The chain runs to 510 residues: 2,3-bisphosphoglycerate-independent phosphoglycerate mutase (510 aa).

2 residues coordinate Mn(2+): Asp-12 and Ser-62. Ser-62 serves as the catalytic Phosphoserine intermediate. Residues His-123, 153 to 154 (RD), Arg-185, Arg-191, 261 to 264 (RPDR), and Lys-336 each bind substrate. Residues Asp-403, His-407, Asp-444, His-445, and His-462 each contribute to the Mn(2+) site.

This sequence belongs to the BPG-independent phosphoglycerate mutase family. Monomer. Requires Mn(2+) as cofactor.

The enzyme catalyses (2R)-2-phosphoglycerate = (2R)-3-phosphoglycerate. It functions in the pathway carbohydrate degradation; glycolysis; pyruvate from D-glyceraldehyde 3-phosphate: step 3/5. Essential for rapid growth and for sporulation. Catalyzes the interconversion of 2-phosphoglycerate and 3-phosphoglycerate. The sequence is that of 2,3-bisphosphoglycerate-independent phosphoglycerate mutase from Priestia megaterium (strain ATCC 12872 / QMB1551) (Bacillus megaterium).